The chain runs to 456 residues: Bifunctional protein GlmU (456 aa).

The tract at residues 1–229 (MSNSSMSVVI…LSEVEGVNNR (229 aa)) is pyrophosphorylase. UDP-N-acetyl-alpha-D-glucosamine-binding positions include 11–14 (LAAG), lysine 25, glutamine 76, 81–82 (GT), 103–105 (YGD), glycine 140, glutamate 154, asparagine 169, and asparagine 227. Position 105 (aspartate 105) interacts with Mg(2+). Asparagine 227 is a Mg(2+) binding site. The tract at residues 230–250 (LQLSALERVFQTEQAEKLLLA) is linker. Residues 251–456 (GVMLLDPSRF…QGWKRPVKKK (206 aa)) are N-acetyltransferase. Arginine 333 and lysine 351 together coordinate UDP-N-acetyl-alpha-D-glucosamine. Residue histidine 363 is the Proton acceptor of the active site. Tyrosine 366 and asparagine 377 together coordinate UDP-N-acetyl-alpha-D-glucosamine. Acetyl-CoA-binding positions include alanine 380, 386-387 (NY), serine 405, alanine 423, and arginine 440.

The protein in the N-terminal section; belongs to the N-acetylglucosamine-1-phosphate uridyltransferase family. It in the C-terminal section; belongs to the transferase hexapeptide repeat family. In terms of assembly, homotrimer. Mg(2+) serves as cofactor.

The protein localises to the cytoplasm. It carries out the reaction alpha-D-glucosamine 1-phosphate + acetyl-CoA = N-acetyl-alpha-D-glucosamine 1-phosphate + CoA + H(+). It catalyses the reaction N-acetyl-alpha-D-glucosamine 1-phosphate + UTP + H(+) = UDP-N-acetyl-alpha-D-glucosamine + diphosphate. Its pathway is nucleotide-sugar biosynthesis; UDP-N-acetyl-alpha-D-glucosamine biosynthesis; N-acetyl-alpha-D-glucosamine 1-phosphate from alpha-D-glucosamine 6-phosphate (route II): step 2/2. It participates in nucleotide-sugar biosynthesis; UDP-N-acetyl-alpha-D-glucosamine biosynthesis; UDP-N-acetyl-alpha-D-glucosamine from N-acetyl-alpha-D-glucosamine 1-phosphate: step 1/1. It functions in the pathway bacterial outer membrane biogenesis; LPS lipid A biosynthesis. Its function is as follows. Catalyzes the last two sequential reactions in the de novo biosynthetic pathway for UDP-N-acetylglucosamine (UDP-GlcNAc). The C-terminal domain catalyzes the transfer of acetyl group from acetyl coenzyme A to glucosamine-1-phosphate (GlcN-1-P) to produce N-acetylglucosamine-1-phosphate (GlcNAc-1-P), which is converted into UDP-GlcNAc by the transfer of uridine 5-monophosphate (from uridine 5-triphosphate), a reaction catalyzed by the N-terminal domain. This Yersinia pseudotuberculosis serotype O:1b (strain IP 31758) protein is Bifunctional protein GlmU.